Reading from the N-terminus, the 158-residue chain is Xanthine-guanine phosphoribosyltransferase (158 aa).

5-phospho-alpha-D-ribose 1-diphosphate contacts are provided by residues 38-39 (RG) and 90-98 (DDLVDTGGT). Mg(2+) is bound at residue D91. D94 and I137 together coordinate guanine. D94 and I137 together coordinate xanthine. GMP-binding positions include 94–98 (DTGGT) and 136–137 (WI).

This sequence belongs to the purine/pyrimidine phosphoribosyltransferase family. XGPT subfamily. As to quaternary structure, homotetramer. Requires Mg(2+) as cofactor.

Its subcellular location is the cell inner membrane. It catalyses the reaction GMP + diphosphate = guanine + 5-phospho-alpha-D-ribose 1-diphosphate. The enzyme catalyses XMP + diphosphate = xanthine + 5-phospho-alpha-D-ribose 1-diphosphate. The catalysed reaction is IMP + diphosphate = hypoxanthine + 5-phospho-alpha-D-ribose 1-diphosphate. It functions in the pathway purine metabolism; GMP biosynthesis via salvage pathway; GMP from guanine: step 1/1. The protein operates within purine metabolism; XMP biosynthesis via salvage pathway; XMP from xanthine: step 1/1. Purine salvage pathway enzyme that catalyzes the transfer of the ribosyl-5-phosphate group from 5-phospho-alpha-D-ribose 1-diphosphate (PRPP) to the N9 position of the 6-oxopurines guanine and xanthine to form the corresponding ribonucleotides GMP (guanosine 5'-monophosphate) and XMP (xanthosine 5'-monophosphate), with the release of PPi. To a lesser extent, also acts on hypoxanthine. The polypeptide is Xanthine-guanine phosphoribosyltransferase (Buchnera aphidicola subsp. Acyrthosiphon pisum (strain APS) (Acyrthosiphon pisum symbiotic bacterium)).